A 473-amino-acid chain; its full sequence is Photosystem II CP43 reaction center protein (473 aa).

A propeptide spanning residues 1 to 14 (MKTLYSLRRFYPVE) is cleaved from the precursor. At Thr-15 the chain carries N-acetylthreonine. A Phosphothreonine modification is found at Thr-15. 5 helical membrane-spanning segments follow: residues 69-93 (LFEVAHFVPEKPMYEQGLILLPHLA), 134-155 (LLGPETLEESFPFFGYVWKDRN), 178-200 (KALYFGGVYDTWAPGGGDVRKIT), 255-275 (KPFAWARRALVWSGEAYLSYS), and 291-312 (WFNNTAYPSEFYGPTGPEASQA). Glu-367 contributes to the [CaMn4O5] cluster binding site. A helical transmembrane segment spans residues 447 to 471 (RARAAAAGFEKGIDRDFEPVLSMTP).

Belongs to the PsbB/PsbC family. PsbC subfamily. PSII is composed of 1 copy each of membrane proteins PsbA, PsbB, PsbC, PsbD, PsbE, PsbF, PsbH, PsbI, PsbJ, PsbK, PsbL, PsbM, PsbT, PsbX, PsbY, PsbZ, Psb30/Ycf12, at least 3 peripheral proteins of the oxygen-evolving complex and a large number of cofactors. It forms dimeric complexes. The cofactor is Binds multiple chlorophylls and provides some of the ligands for the Ca-4Mn-5O cluster of the oxygen-evolving complex. It may also provide a ligand for a Cl- that is required for oxygen evolution. PSII binds additional chlorophylls, carotenoids and specific lipids..

Its subcellular location is the plastid. It is found in the chloroplast thylakoid membrane. In terms of biological role, one of the components of the core complex of photosystem II (PSII). It binds chlorophyll and helps catalyze the primary light-induced photochemical processes of PSII. PSII is a light-driven water:plastoquinone oxidoreductase, using light energy to abstract electrons from H(2)O, generating O(2) and a proton gradient subsequently used for ATP formation. This is Photosystem II CP43 reaction center protein from Eucalyptus globulus subsp. globulus (Tasmanian blue gum).